The primary structure comprises 386 residues: Galactokinase (386 aa).

Substrate is bound at residue 32–35 (EHTD). Residues S66 and 123–129 (GASLSSS) contribute to the ATP site. Mg(2+)-binding residues include S129 and E161. D173 acts as the Proton acceptor in catalysis. Y223 is a substrate binding site.

The protein belongs to the GHMP kinase family. GalK subfamily.

The protein resides in the cytoplasm. It carries out the reaction alpha-D-galactose + ATP = alpha-D-galactose 1-phosphate + ADP + H(+). It participates in carbohydrate metabolism; galactose metabolism. Catalyzes the transfer of the gamma-phosphate of ATP to D-galactose to form alpha-D-galactose-1-phosphate (Gal-1-P). The protein is Galactokinase of Staphylococcus saprophyticus subsp. saprophyticus (strain ATCC 15305 / DSM 20229 / NCIMB 8711 / NCTC 7292 / S-41).